Here is a 752-residue protein sequence, read N- to C-terminus: MAILSPRKTALALAVALSCAWQSPAFAHGGEAHMVPMDKTLQDFGADVQWDDYAQMFTLIKDGAYVKVKPGAKTAIVNGKTLELQVPVVMKDGKAWVSDTFINDVFQSGLDQTFQVEKRPHPLNSLSAAEISAAVAIVKAAADFKPNTRFTEISLREPDKKAVWDFALNGTPVNAPRAADVIMLDGKHVIEAVVDLQNKKVLSWTPIKDAHGMVLLDDFASVQNIINASSEFAEVLKKHGIDDPSKVITTPLTVGYFDGKDGLKQDARLLKVVSYLDVGDGNYWAHPIENLVAVVDLEQKKIIKIEEGPTIPVPMAARPYDGRDRVAPKIKPLDIIEPEGKNYTITGDMIHWQNWDFHLRMNSRVGPILSTVTYNDNGKKRQVMYEGSLGGMIVPYGDPDVGWYFKAYLDSGDYGMGTLTSPIVRGKDAPSNAVLLDETIADYTGTPTTIPRAIAIFERYAGPEYKHQEMGKPNVSTERRELVVRWISTVGNYDYIFDWVFHENGTIGIDAGATGIEAVKGVQAKTMHDPSAKEDTRYGTLIDHNIVGTTHQHIYNFRLDLDVDGENNTLVAMDPEVKPNTAGGPRTSTMQINQYTIDSEQKAAQKFDPGTIRLLSNITKENRMGNPVSYQIIPYAGGTHPVATGAKFAPDEWIYHRLSFMDKQLWVTRYHPTERFPEGKYPNRSIHDTGLGQYAKDDESLDNHDDVVWITTGTTHVARAEEWPIMPTEWAHALLKPWNFFDETPTLGEKKE.

A signal peptide spans 1–27; that stretch reads MAILSPRKTALALAVALSCAWQSPAFA. Substrate contacts are provided by residues 408 to 419 and 490 to 495; these read YLDSGDYGMGTL and VGNYDY. Asp410 serves as the catalytic Proton acceptor. The Schiff-base intermediate with substrate; via topaquinone role is filled by Tyr493. The residue at position 493 (Tyr493) is a 2',4',5'-topaquinone. His551 and His553 together coordinate Cu cation. Residues Asp560, Leu561, Asp562, Glu600, Tyr694, Asp697, Glu699, and Asp705 each contribute to the Ca(2+) site. Asp560 serves as a coordination point for Mn(2+). Residue Asp562 participates in Mn(2+) binding. Mn(2+) is bound at residue Asp705. Position 716 (His716) interacts with Cu cation.

It belongs to the copper/topaquinone oxidase family. As to quaternary structure, homodimer. Cu cation serves as cofactor. The cofactor is Ca(2+). It depends on L-topaquinone as a cofactor. Mn(2+) is required as a cofactor. Topaquinone (TPQ) is generated by copper-dependent autoxidation of a specific tyrosyl residue.

Its subcellular location is the periplasm. The catalysed reaction is a primary methyl amine + O2 + H2O = an aldehyde + H2O2 + NH4(+). In terms of biological role, active on tyramine, tryptamine, beta-phenethylamine and dopamine. This Klebsiella michiganensis (strain ATCC 8724 / DSM 4798 / JCM 20051 / NBRC 3318 / NRRL B-199 / KCTC 1686 / BUCSAV 143 / CCM 1901) protein is Primary amine oxidase (maoA).